The chain runs to 284 residues: Phospholipid phosphatase 1 (284 aa).

Residues 1-6 are Cytoplasmic-facing; sequence MFDKTR. Positions 5–7 match the PDZ-binding; involved in localization to the apical cell membrane motif; it reads TRL. A helical transmembrane segment spans residues 7–27; sequence LPYVALDVLCVLLAGLPFAIL. Topologically, residues 28–53 are extracellular; it reads TSRHTPFQRGVFCNDESIKYPYKEDT. A helical transmembrane segment spans residues 54-74; sequence IPYALLGGIIIPFSIIVIILG. Residues 75 to 94 are Cytoplasmic-facing; sequence ETLSVYCNLLHSNSFIRNNY. Residues 95-115 form a helical membrane-spanning segment; sequence IATIYKAIGTFLFGAAASQSL. At 116–164 the chain is on the extracellular side; that stretch reads TDIAKYSIGRLRPHFLDVCDPDWSKINCSDGYIEYYICRGNAERVKEGR. Positions 120-128 are phosphatase sequence motif I; it reads KYSIGRLRP. N142 carries N-linked (GlcNAc...) asparagine glycosylation. Residues 165-185 traverse the membrane as a helical segment; it reads LSFYSGHSSFSMYCMLFVALY. The segment at 168 to 171 is phosphatase sequence motif II; sequence YSGH. Residue H171 is the Proton donors of the active site. Residues 186 to 199 are Cytoplasmic-facing; sequence LQARMKGDWARLLR. A helical transmembrane segment spans residues 200-220; it reads PTLQFGLVAVSIYVGLSRVSD. The segment at 216 to 227 is phosphatase sequence motif III; that stretch reads SRVSDYKHHWSD. The Extracellular segment spans residues 221-229; it reads YKHHWSDVL. H223 serves as the catalytic Nucleophile. A helical transmembrane segment spans residues 230 to 250; sequence TGLIQGALVAILVAVYVSDFF. Residues 251-284 are Cytoplasmic-facing; it reads KERTSFKERKEEDSHTTLHETPTTGNHYPSNHQP. The disordered stretch occupies residues 260–284; the sequence is KEEDSHTTLHETPTTGNHYPSNHQP. A compositionally biased stretch (polar residues) spans 269-284; the sequence is HETPTTGNHYPSNHQP.

This sequence belongs to the PA-phosphatase related phosphoesterase family. As to quaternary structure, forms functional homodimers and homooligomers that are not required for substrate recognition and catalytic activity. Can also form heterooligomers with PLPP2 and PLPP3. In terms of processing, N-glycosylated. N-linked sugars are of the complex type. N-glycosylation is not required for the phosphatase activity. Widely expressed with highest expression found in prostate. Found to be down-regulated in colon adenocarcinomas. As to expression, predominant in kidney, lung, placenta and liver. In terms of tissue distribution, predominant in heart and pancreas.

The protein resides in the cell membrane. It localises to the apical cell membrane. The protein localises to the membrane raft. It is found in the membrane. Its subcellular location is the caveola. It catalyses the reaction a 1,2-diacyl-sn-glycero-3-phosphate + H2O = a 1,2-diacyl-sn-glycerol + phosphate. The catalysed reaction is 1,2-dihexadecanoyl-sn-glycero-3-phosphate + H2O = 1,2-dihexadecanoyl-sn-glycerol + phosphate. The enzyme catalyses 1,2-di-(9Z-octadecenoyl)-sn-glycero-3-phosphate + H2O = 1,2-di-(9Z-octadecenoyl)-sn-glycerol + phosphate. It carries out the reaction a monoacyl-sn-glycero-3-phosphate + H2O = a monoacylglycerol + phosphate. It catalyses the reaction (9Z)-octadecenoyl-sn-glycero-3-phosphate + H2O = (9Z-octadecenoyl)-glycerol + phosphate. The catalysed reaction is a 1-acyl-sn-glycero-3-phosphate + H2O = a 1-acyl-sn-glycerol + phosphate. The enzyme catalyses 1-(9Z-octadecenoyl)-sn-glycero-3-phosphate + H2O = 1-(9Z-octadecenoyl)-sn-glycerol + phosphate. It carries out the reaction a 1,2-diacyl-sn-glycerol 3-diphosphate + H2O = a 1,2-diacyl-sn-glycero-3-phosphate + phosphate + H(+). It catalyses the reaction sphing-4-enine 1-phosphate + H2O = sphing-4-enine + phosphate. The catalysed reaction is an N-acylsphing-4-enine 1-phosphate + H2O = an N-acylsphing-4-enine + phosphate. The enzyme catalyses N-(octanoyl)-sphing-4-enine-1-phosphate + H2O = N-octanoylsphing-4-enine + phosphate. It carries out the reaction N-(9Z-octadecenoyl)-ethanolamine phosphate + H2O = N-(9Z-octadecenoyl) ethanolamine + phosphate. It catalyses the reaction 1-hexadecanoyl-2-(9Z-octadecenoyl)-sn-glycero-3-phosphate + H2O = 1-hexadecanoyl-2-(9Z-octadecenoyl)-sn-glycerol + phosphate. It functions in the pathway lipid metabolism; phospholipid metabolism. Magnesium-independent phospholipid phosphatase. Insensitive to N-ethylmaleimide. Inhibited by sphingosine, zinc ions and modestly by propanolol. Inhibited by vanadate. In terms of biological role, magnesium-independent phospholipid phosphatase of the plasma membrane that catalyzes the dephosphorylation of a variety of glycerolipid and sphingolipid phosphate esters including phosphatidate/PA, lysophosphatidate/LPA, diacylglycerol pyrophosphate/DGPP, sphingosine 1-phosphate/S1P and ceramide 1-phosphate/C1P. Also acts on N-oleoyl ethanolamine phosphate/N-(9Z-octadecenoyl)-ethanolamine phosphate, a potential physiological compound. Through its extracellular phosphatase activity allows both the hydrolysis and the cellular uptake of these bioactive lipid mediators from the milieu, regulating signal transduction in different cellular processes. It is for instance essential for the extracellular hydrolysis of S1P and subsequent conversion into intracellular S1P. Involved in the regulation of inflammation, platelets activation, cell proliferation and migration among other processes. May also have an intracellular activity to regulate phospholipid-mediated signaling pathways. This Homo sapiens (Human) protein is Phospholipid phosphatase 1.